The sequence spans 554 residues: Arginine--tRNA ligase (554 aa).

The 'HIGH' region signature appears at 129–139; it reads ANPTGPLHIGH.

The protein belongs to the class-I aminoacyl-tRNA synthetase family. As to quaternary structure, monomer.

It is found in the cytoplasm. It catalyses the reaction tRNA(Arg) + L-arginine + ATP = L-arginyl-tRNA(Arg) + AMP + diphosphate. The protein is Arginine--tRNA ligase of Citrifermentans bemidjiense (strain ATCC BAA-1014 / DSM 16622 / JCM 12645 / Bem) (Geobacter bemidjiensis).